Consider the following 432-residue polypeptide: Adenylosuccinate synthetase (432 aa).

GTP contacts are provided by residues 11–17 and 39–41; these read GDEGKGK and GHT. Catalysis depends on Asp-12, which acts as the Proton acceptor. Mg(2+) is bound by residues Asp-12 and Gly-39. IMP-binding positions include 12 to 15, 37 to 40, Thr-134, Arg-148, Asn-230, Thr-245, and Arg-309; these read DEGK and NAGH. His-40 (proton donor) is an active-site residue. Position 305–311 (305–311) interacts with substrate; it reads VTTGRKR. GTP-binding positions include Arg-311, 337 to 339, and 419 to 421; these read KLD and GTG.

Belongs to the adenylosuccinate synthetase family. As to quaternary structure, homodimer. Mg(2+) is required as a cofactor.

It is found in the cytoplasm. It catalyses the reaction IMP + L-aspartate + GTP = N(6)-(1,2-dicarboxyethyl)-AMP + GDP + phosphate + 2 H(+). It participates in purine metabolism; AMP biosynthesis via de novo pathway; AMP from IMP: step 1/2. Plays an important role in the de novo pathway and in the salvage pathway of purine nucleotide biosynthesis. Catalyzes the first committed step in the biosynthesis of AMP from IMP. The polypeptide is Adenylosuccinate synthetase (Vanderwaltozyma polyspora (strain ATCC 22028 / DSM 70294 / BCRC 21397 / CBS 2163 / NBRC 10782 / NRRL Y-8283 / UCD 57-17) (Kluyveromyces polysporus)).